The sequence spans 142 residues: Hemoglobin subunit alpha-2 (142 aa).

The 141-residue stretch at 2–142 (LLSADDKKHI…VSTVLTSKYR (141 aa)) folds into the Globin domain. Position 59 (His59) interacts with O2. His88 serves as a coordination point for heme b.

The protein belongs to the globin family. Heterotetramer of two alpha chains and two beta chains. As to expression, red blood cells.

Functionally, involved in oxygen transport from the lung to the various peripheral tissues. The sequence is that of Hemoglobin subunit alpha-2 (hba2) from Xenopus laevis (African clawed frog).